Here is a 65-residue protein sequence, read N- to C-terminus: Large ribosomal subunit protein bL35 (65 aa).

This sequence belongs to the bacterial ribosomal protein bL35 family.

The polypeptide is Large ribosomal subunit protein bL35 (Magnetococcus marinus (strain ATCC BAA-1437 / JCM 17883 / MC-1)).